The primary structure comprises 36 residues: Photosystem I reaction center subunit VIII (36 aa).

A helical transmembrane segment spans residues 6-28; the sequence is LPSIFVPXVGLVFPAIAMASXFL.

It belongs to the PsaI family.

Its subcellular location is the plastid. It is found in the chloroplast thylakoid membrane. In terms of biological role, may help in the organization of the PsaL subunit. This Acorus gramineus (Dwarf sweet flag) protein is Photosystem I reaction center subunit VIII.